Here is a 512-residue protein sequence, read N- to C-terminus: Oryzalexin E synthase (512 aa).

The helical transmembrane segment at 6–26 (SELWMTAVATCMSLLLYLTIL) threads the bilayer. Heme is bound at residue Cys452.

It belongs to the cytochrome P450 family. Requires heme as cofactor.

The protein resides in the membrane. The catalysed reaction is ent-sandaracopimaradien-3beta-ol + reduced [NADPH--hemoprotein reductase] + O2 = oryzalexin E + oxidized [NADPH--hemoprotein reductase] + H2O + H(+). In terms of biological role, enzyme of the diterpenoid metabolism involved in the biosynthesis of the oryzalexin class of phytoalexins. Can use ent-sandaracopimaradien and syn-stemodene as substrates, but no activity with syn-stemoden-19-oic acid. Hydroxylates 3-alpha-hydroxy-ent-sandaracopimaradiene at C-9-beta, resulting in a 3-alpha,9-beta-diol corresponding to oryzalexins E. The chain is Oryzalexin E synthase from Oryza sativa subsp. japonica (Rice).